Consider the following 194-residue polypeptide: Sigma factor AlgU negative regulatory protein (194 aa).

The helical transmembrane segment at 89-105 (LAVAASVTLAVLAGVRL) threads the bilayer.

Belongs to the RseA family.

It localises to the cell membrane. Functionally, negative regulator of the sigma factor AlgU. Plays a role in the differentiation of P.aeruginosa into the alginate-producing form. Inactivation of mucA causes a switch from the non-mucoid to mucoid state resulting in constitutive expression of alginate biosynthetic genes. In Pseudomonas aeruginosa (strain ATCC 15692 / DSM 22644 / CIP 104116 / JCM 14847 / LMG 12228 / 1C / PRS 101 / PAO1), this protein is Sigma factor AlgU negative regulatory protein (mucA).